A 193-amino-acid polypeptide reads, in one-letter code: Ion-translocating oxidoreductase complex subunit A (193 aa).

A run of 6 helical transmembrane segments spans residues 5–25 (LMLF…FLGL), 39–59 (LGMG…AWLI), 62–82 (FILL…FIIA), 102–122 (LLGI…VALL), 134–154 (ALYG…FAAI), and 171–191 (SIAL…TGLV).

Belongs to the NqrDE/RnfAE family. The complex is composed of six subunits: RnfA, RnfB, RnfC, RnfD, RnfE and RnfG.

It is found in the cell inner membrane. Functionally, part of a membrane-bound complex that couples electron transfer with translocation of ions across the membrane. The polypeptide is Ion-translocating oxidoreductase complex subunit A (Sodalis glossinidius (strain morsitans)).